Here is a 395-residue protein sequence, read N- to C-terminus: Probable alcohol dehydrogenase EutG (395 aa).

Residues aspartate 57, 116–120, 156–160, lysine 178, and 197–201 each bind NAD(+); these read GSVLD, TTAGT, and LTEGV. Residues aspartate 212, histidine 216, histidine 281, and histidine 295 each contribute to the Fe cation site. NAD(+)-binding residues include histidine 295 and aspartate 354.

It belongs to the iron-containing alcohol dehydrogenase family. It depends on Fe cation as a cofactor.

It is found in the bacterial microcompartment. The catalysed reaction is ethanol + NAD(+) = acetaldehyde + NADH + H(+). The protein operates within amine and polyamine degradation; ethanolamine degradation. Its function is as follows. May act on the acetaldehyde produced from the degradation of ethanolamine, producing ethanol. Active on acetaldehyde and isobutyraldehyde in vitro. In vitro works equally well with NADH or NADPH. This is Probable alcohol dehydrogenase EutG (eutG) from Escherichia coli (strain K12).